The chain runs to 474 residues: Bifunctional protein HldE (474 aa).

The segment at 1–318 (MKLSMPRFDQ…RAVQREQGSE (318 aa)) is ribokinase. 194–197 (NLSE) is an ATP binding site. The active site involves Asp263. Residues 343 to 474 (FTNGCFDILH…AIVEKIRQKG (132 aa)) are cytidylyltransferase.

The protein in the N-terminal section; belongs to the carbohydrate kinase PfkB family. This sequence in the C-terminal section; belongs to the cytidylyltransferase family. In terms of assembly, homodimer.

The enzyme catalyses D-glycero-beta-D-manno-heptose 7-phosphate + ATP = D-glycero-beta-D-manno-heptose 1,7-bisphosphate + ADP + H(+). It catalyses the reaction D-glycero-beta-D-manno-heptose 1-phosphate + ATP + H(+) = ADP-D-glycero-beta-D-manno-heptose + diphosphate. Its pathway is nucleotide-sugar biosynthesis; ADP-L-glycero-beta-D-manno-heptose biosynthesis; ADP-L-glycero-beta-D-manno-heptose from D-glycero-beta-D-manno-heptose 7-phosphate: step 1/4. The protein operates within nucleotide-sugar biosynthesis; ADP-L-glycero-beta-D-manno-heptose biosynthesis; ADP-L-glycero-beta-D-manno-heptose from D-glycero-beta-D-manno-heptose 7-phosphate: step 3/4. Functionally, catalyzes the phosphorylation of D-glycero-D-manno-heptose 7-phosphate at the C-1 position to selectively form D-glycero-beta-D-manno-heptose-1,7-bisphosphate. Catalyzes the ADP transfer from ATP to D-glycero-beta-D-manno-heptose 1-phosphate, yielding ADP-D-glycero-beta-D-manno-heptose. This Pseudomonas aeruginosa (strain UCBPP-PA14) protein is Bifunctional protein HldE.